The following is a 267-amino-acid chain: Ribosomal RNA large subunit methyltransferase E (267 aa).

Gly52, Phe54, Asp72, Asp90, and Asp114 together coordinate S-adenosyl-L-methionine. Catalysis depends on Lys154, which acts as the Proton acceptor. Positions 212–252 (EAPRAPAPPEQAAAPEEATAPATRAARQKPAPAKKPAAAKR) are enriched in low complexity. Residues 212–267 (EAPRAPAPPEQAAAPEEATAPATRAARQKPAPAKKPAAAKRPAARKRAAKKPARRA) form a disordered region. The segment covering 253–267 (PAARKRAAKKPARRA) has biased composition (basic residues).

The protein belongs to the class I-like SAM-binding methyltransferase superfamily. RNA methyltransferase RlmE family.

The protein resides in the cytoplasm. It catalyses the reaction uridine(2552) in 23S rRNA + S-adenosyl-L-methionine = 2'-O-methyluridine(2552) in 23S rRNA + S-adenosyl-L-homocysteine + H(+). Its function is as follows. Specifically methylates the uridine in position 2552 of 23S rRNA at the 2'-O position of the ribose in the fully assembled 50S ribosomal subunit. In Anaeromyxobacter dehalogenans (strain 2CP-C), this protein is Ribosomal RNA large subunit methyltransferase E.